A 159-amino-acid chain; its full sequence is MQKRAIYPGTFDPITNGHIDIVTRATQMFDHVILAIAASPSKKPMFTLEERVALAQQATAHLGNVEVVGFSDLMANFARNQHATVLIRGLRAVADFEYEMQLAHMNRHLMPELESVFLMPSKEWSFISSSLVKEVARHQGDVTHFLPENVHQALMAKLA.

T10 provides a ligand contact to substrate. ATP-binding positions include T10 to F11 and H18. Positions 42, 74, and 88 each coordinate substrate. ATP-binding positions include G89 to R91, E99, and W124 to S130.

It belongs to the bacterial CoaD family. As to quaternary structure, homohexamer. Mg(2+) is required as a cofactor.

It is found in the cytoplasm. The enzyme catalyses (R)-4'-phosphopantetheine + ATP + H(+) = 3'-dephospho-CoA + diphosphate. Its pathway is cofactor biosynthesis; coenzyme A biosynthesis; CoA from (R)-pantothenate: step 4/5. Reversibly transfers an adenylyl group from ATP to 4'-phosphopantetheine, yielding dephospho-CoA (dPCoA) and pyrophosphate. The polypeptide is Phosphopantetheine adenylyltransferase (Escherichia coli (strain SMS-3-5 / SECEC)).